The primary structure comprises 150 residues: Protein SLM6 (150 aa).

Residues 1–76 (MCSRFSSTSL…SLLRSGVFPS (76 aa)) lie on the Extracellular side of the membrane. A helical membrane pass occupies residues 77-97 (WLFCMFSSILALAISNSFFFF). Residues 98–104 (SSNACFS) are Cytoplasmic-facing. Residues 105–125 (LLFNSFLVTGFSFSADLLVLA) form a helical membrane-spanning segment. Residues 126 to 150 (AAADTLESNVSNDIGGNCATRLFKL) lie on the Extracellular side of the membrane.

Its subcellular location is the membrane. The sequence is that of Protein SLM6 from Saccharomyces cerevisiae (strain ATCC 204508 / S288c) (Baker's yeast).